A 153-amino-acid chain; its full sequence is Ribosome maturation factor RimP (153 aa).

It belongs to the RimP family.

It localises to the cytoplasm. Required for maturation of 30S ribosomal subunits. The chain is Ribosome maturation factor RimP from Vesicomyosocius okutanii subsp. Calyptogena okutanii (strain HA).